An 83-amino-acid polypeptide reads, in one-letter code: Small ribosomal subunit protein uS17 (83 aa).

This sequence belongs to the universal ribosomal protein uS17 family. In terms of assembly, part of the 30S ribosomal subunit.

Functionally, one of the primary rRNA binding proteins, it binds specifically to the 5'-end of 16S ribosomal RNA. The chain is Small ribosomal subunit protein uS17 from Ehrlichia canis (strain Jake).